Here is a 1027-residue protein sequence, read N- to C-terminus: Abnormal embryogenesis protein 30 (1027 aa).

WD repeat units lie at residues 18-65 and 70-109; these read RTPF…IQAV and KLDS…VRFS. Disordered stretches follow at residues 619 to 655 and 1005 to 1027; these read NDSS…ACDL and AMDS…DDDI. Acidic residues-rich tracts occupy residues 625 to 647 and 1014 to 1027; these read LEED…EPEG and DNGE…DDDI.

It belongs to the APC4 family. As to quaternary structure, the APC/C is probably composed of at least 12 subunits: apc-2, apc-10, apc-11, cdc-26, emb-1, emb-27, emb-30, mat-1, mat-2, mat-3, such-1 and gfi-3.

It participates in protein modification; protein ubiquitination. Its function is as follows. Probable component of the anaphase promoting complex/cyclosome (APC/C), a cell cycle-regulated E3 ubiquitin ligase that controls progression through mitosis and the G1 phase of the cell cycle. The APC/C complex acts by mediating ubiquitination and subsequent degradation of target proteins. Developmental role in early embryogenesis and the metaphase to anaphase transition in oocyte and spermatocyte meiosis and mitosis in somatic and germ cells. Required for embryonic anterior-posterior axis formation. Negatively regulates ify-1 protein levels during meiosis I. Plays a role in regulating the abundance of glr-1 receptors in postmitotic neurons, which may in turn control animal locomotion. Involved in regulating GABA neurotransmitter release at neuromuscular junctions in GABA motor neurons. This is Abnormal embryogenesis protein 30 from Caenorhabditis elegans.